Consider the following 208-residue polypeptide: Translation initiation factor IF-3 (208 aa).

It belongs to the IF-3 family. As to quaternary structure, monomer.

It is found in the cytoplasm. In terms of biological role, IF-3 binds to the 30S ribosomal subunit and shifts the equilibrium between 70S ribosomes and their 50S and 30S subunits in favor of the free subunits, thus enhancing the availability of 30S subunits on which protein synthesis initiation begins. The protein is Translation initiation factor IF-3 of Parabacteroides distasonis (strain ATCC 8503 / DSM 20701 / CIP 104284 / JCM 5825 / NCTC 11152).